We begin with the raw amino-acid sequence, 202 residues long: Glycerol-3-phosphate acyltransferase (202 aa).

The next 4 helical transmembrane spans lie at 2 to 22, 85 to 105, 119 to 139, and 158 to 178; these read ANLL…AVVV, LAMV…HRFA, AINP…AFFF, and VLME…ILLI.

Belongs to the PlsY family. As to quaternary structure, probably interacts with PlsX.

It localises to the cell inner membrane. It catalyses the reaction an acyl phosphate + sn-glycerol 3-phosphate = a 1-acyl-sn-glycero-3-phosphate + phosphate. It participates in lipid metabolism; phospholipid metabolism. In terms of biological role, catalyzes the transfer of an acyl group from acyl-phosphate (acyl-PO(4)) to glycerol-3-phosphate (G3P) to form lysophosphatidic acid (LPA). This enzyme utilizes acyl-phosphate as fatty acyl donor, but not acyl-CoA or acyl-ACP. The protein is Glycerol-3-phosphate acyltransferase of Cupriavidus pinatubonensis (strain JMP 134 / LMG 1197) (Cupriavidus necator (strain JMP 134)).